A 392-amino-acid chain; its full sequence is Homeobox protein engrailed-1 (392 aa).

Disordered stretches follow at residues 1-100 (MEEQ…AQLH), 132-164 (ARGG…TRAP), 219-251 (KPSD…PAIL), and 282-306 (SDRP…DKRP). Over residues 14 to 36 (SALGAAAAATPGGLSLSLSPGAS) the composition is skewed to low complexity. 2 stretches are compositionally biased toward pro residues: residues 51 to 66 (SPQP…PCLP) and 75 to 84 (PPHPPPPPPQ). Residues 85–100 (HLAAPAHQPQPAAQLH) show a composition bias toward low complexity. Positions 223–236 (TGGGGSGGGAGSPG) are enriched in gly residues. A DNA-binding region (homeobox) is located at residues 303–362 (DKRPRTAFTAEQLQRLKAEFQANRYITEQRRQTLAQELSLNESQIKIWFQNKRAKIKKAT).

It belongs to the engrailed homeobox family.

It is found in the nucleus. Required for proper formation of the apical ectodermal ridge and correct dorsal-ventral patterning in the limb. This chain is Homeobox protein engrailed-1 (EN1), found in Homo sapiens (Human).